Consider the following 364-residue polypeptide: Dihydroorotate dehydrogenase (quinone) (364 aa).

Residues 61–65 and threonine 85 contribute to the FMN site; that span reads AGFDK. Lysine 65 lines the substrate pocket. Substrate is bound at residue 110–114; that stretch reads NRMGF. Residues asparagine 139 and asparagine 170 each coordinate FMN. Asparagine 170 provides a ligand contact to substrate. Serine 173 acts as the Nucleophile in catalysis. Asparagine 175 contributes to the substrate binding site. Residues lysine 214 and alanine 242 each contribute to the FMN site. 243–244 contacts substrate; the sequence is NT. FMN contacts are provided by residues glycine 266, glycine 295, and 316–317; that span reads YS.

It belongs to the dihydroorotate dehydrogenase family. Type 2 subfamily. In terms of assembly, monomer. Requires FMN as cofactor.

The protein localises to the cell membrane. It carries out the reaction (S)-dihydroorotate + a quinone = orotate + a quinol. Its pathway is pyrimidine metabolism; UMP biosynthesis via de novo pathway; orotate from (S)-dihydroorotate (quinone route): step 1/1. Catalyzes the conversion of dihydroorotate to orotate with quinone as electron acceptor. This Rhodopseudomonas palustris (strain ATCC BAA-98 / CGA009) protein is Dihydroorotate dehydrogenase (quinone).